We begin with the raw amino-acid sequence, 177 residues long: Large ribosomal subunit protein uL6 (177 aa).

The protein belongs to the universal ribosomal protein uL6 family. Part of the 50S ribosomal subunit.

In terms of biological role, this protein binds to the 23S rRNA, and is important in its secondary structure. It is located near the subunit interface in the base of the L7/L12 stalk, and near the tRNA binding site of the peptidyltransferase center. The polypeptide is Large ribosomal subunit protein uL6 (Micrococcus luteus (strain ATCC 4698 / DSM 20030 / JCM 1464 / CCM 169 / CCUG 5858 / IAM 1056 / NBRC 3333 / NCIMB 9278 / NCTC 2665 / VKM Ac-2230) (Micrococcus lysodeikticus)).